The sequence spans 181 residues: Dual-action ribosomal maturation protein DarP (181 aa).

The disordered stretch occupies residues 1-24 (MTGIKRPMSQYQDDNEWEDWGPSK).

It belongs to the DarP family.

It localises to the cytoplasm. Functionally, member of a network of 50S ribosomal subunit biogenesis factors which assembles along the 30S-50S interface, preventing incorrect 23S rRNA structures from forming. Promotes peptidyl transferase center (PTC) maturation. The protein is Dual-action ribosomal maturation protein DarP of Aeromonas hydrophila subsp. hydrophila (strain ATCC 7966 / DSM 30187 / BCRC 13018 / CCUG 14551 / JCM 1027 / KCTC 2358 / NCIMB 9240 / NCTC 8049).